A 458-amino-acid polypeptide reads, in one-letter code: Putative long chain fatty acid-CoA ligase VraA (458 aa).

The protein belongs to the ATP-dependent AMP-binding enzyme family.

In Staphylococcus aureus (strain Mu3 / ATCC 700698), this protein is Putative long chain fatty acid-CoA ligase VraA (vraA).